A 1564-amino-acid chain; its full sequence is NACHT domain- and WD repeat-containing protein 1 (1564 aa).

The 327-residue stretch at 335-661 (TPLVLFGPPG…LLAIAHRQLV (327 aa)) folds into the NACHT domain. ATP is bound at residue 341 to 348 (GPPGIGKT). WD repeat units lie at residues 866–905 (GCHKGITAMAWGVEEKLLVIGTQDGIMAVWDMEEQHVIHM), 908–947 (GHTGEVRCVKIFAKGTLANSASKDYTLHLWNLLSGQEKFT), 956–994 (PAEPQIWNLHVDEAHKVVYSASGSKINAWNLETAEPVFH), 998–1037 (DASDPWMCMAVLASQATLLTVSRDGVVSLWSSATGKLQGK), 1044–1082 (KEETPTCAVSVQKQGKLVTGFSNGSISLVSSKGDRLLEK), 1083–1121 (LPDAVRFLVVSEDESLLAAGFGRSVRIFLADSRGFRRFM), 1126–1165 (EHEDMVETAVFGTENNLIITGSLDALIQVWSLSEQGTLLD), 1167–1207 (LEGV…RSRV), 1212–1251 (LDRTGLTAVSHNGSYVYFPKIGDKNKVTIWDLAEGEEQDS), 1253–1290 (DTSSEIRCLEVAEQRKLLFTGLVSGVVLVFPLNSRQDV), 1291–1327 (ICIPPPEARKAINCMSLSKCEDRLAIAYDNIVLVLDI), 1338–1376 (GPRYTFYTQLPETLSSVAILTDYRVVYSMTNGDLFLYEC), 1380–1418 (KAFPLETHRSRVACVEVSHKEQLVVSGSEDALLCLWDLQ), and 1425–1462 (EMSYTSSYCRGVQCACFSKDDKYVYVGLKDRSILVWSV).

As to quaternary structure, may interact with HSP90AA1, HSP90AB1 and BAG2. Expressed at highest levels in prostate, followed by testis, retina, trachea and optic nerve. Also detected in brain, epididymis, lung, vagina and pituitary. In the prostate, tends to be up-regulated during malignant progression compared to normal epithelium (at protein level).

It is found in the cytoplasm. It localises to the cytosol. Functionally, may play a role in the control of androgen receptor (AR) protein steady-state levels. This is NACHT domain- and WD repeat-containing protein 1 (NWD1) from Homo sapiens (Human).